The following is a 189-amino-acid chain: Guanylate kinase (189 aa).

In terms of domain architecture, Guanylate kinase-like spans 8 to 186 (GKLTVITGPS…AVIELESLMG (179 aa)). 15-22 (GPSGVGKG) contacts ATP.

This sequence belongs to the guanylate kinase family.

Its subcellular location is the cytoplasm. The enzyme catalyses GMP + ATP = GDP + ADP. Functionally, essential for recycling GMP and indirectly, cGMP. The chain is Guanylate kinase from Prochlorococcus marinus (strain MIT 9313).